A 143-amino-acid polypeptide reads, in one-letter code: uncharacterized protein (143 aa).

The disordered stretch occupies residues 35–59; it reads ITKDRGDRDDGRYGEPRIQRKPGQL. Over residues 36–52 the composition is skewed to basic and acidic residues; sequence TKDRGDRDDGRYGEPRI.

This is an uncharacterized protein from Streptomyces fradiae (Streptomyces roseoflavus).